The sequence spans 183 residues: Oligoribonuclease (183 aa).

One can recognise an Exonuclease domain in the interval 10-173; that stretch reads LIWIDLEMTG…ADIRESIAEL (164 aa). Tyr-131 is a catalytic residue.

Belongs to the oligoribonuclease family.

The protein localises to the cytoplasm. Its function is as follows. 3'-to-5' exoribonuclease specific for small oligoribonucleotides. The chain is Oligoribonuclease from Idiomarina loihiensis (strain ATCC BAA-735 / DSM 15497 / L2-TR).